Consider the following 44-residue polypeptide: Photosystem I reaction center subunit IX (44 aa).

A helical membrane pass occupies residues 7-27; that stretch reads YLSAAPVLSTIWFGALAGLLI.

The protein belongs to the PsaJ family.

It is found in the plastid. The protein resides in the chloroplast thylakoid membrane. Functionally, may help in the organization of the PsaE and PsaF subunits. In Pelargonium hortorum (Common geranium), this protein is Photosystem I reaction center subunit IX.